Reading from the N-terminus, the 537-residue chain is Beta-hexosaminidase subunit beta (537 aa).

The signal sequence occupies residues 1–23; sequence MPGSPRRAPGLLLQALVAMVSLA. An N-linked (GlcNAc...) asparagine glycan is attached at Asn-62. The cysteines at positions 69 and 115 are disulfide-linked. N-linked (GlcNAc...) asparagine glycans are attached at residues Asn-168 and Asn-305. 2 disulfides stabilise this stretch: Cys-287-Cys-338 and Cys-512-Cys-529. Glu-333 acts as the Proton donor in catalysis.

This sequence belongs to the glycosyl hydrolase 20 family. There are 3 forms of beta-hexosaminidase: hexosaminidase A is a heterodimer composed of one subunit alpha and one subunit beta (chain A and B); hexosaminidase B is a homodimer of two beta subunits (two chains A and B); hexosaminidase S is a homodimer of two alpha subunits. The composition of the dimer (isozyme A versus isozyme S) has a significant effect on the substrate specificity of the alpha subunit active site.

Its subcellular location is the lysosome. The protein resides in the cytoplasmic vesicle. It is found in the secretory vesicle. It localises to the cortical granule. The catalysed reaction is Hydrolysis of terminal non-reducing N-acetyl-D-hexosamine residues in N-acetyl-beta-D-hexosaminides.. It catalyses the reaction N-acetyl-beta-D-galactosaminyl-(1-&gt;4)-beta-D-3-sulfogalactosyl-(1-&gt;4)-beta-D-glucosyl-(1&lt;-&gt;1')-ceramide + H2O = a beta-D-3-sulfogalactosyl-(1-&gt;4)-beta-D-glucosyl-(1&lt;-&gt;1')-ceramide + N-acetyl-beta-D-galactosamine. It carries out the reaction a ganglioside GM2 (d18:1(4E)) + H2O = a ganglioside GM3 (d18:1(4E)) + N-acetyl-beta-D-galactosamine. The enzyme catalyses a ganglioside GM2 + H2O = a ganglioside GM3 + N-acetyl-beta-D-galactosamine. The catalysed reaction is beta-D-GalNAc-(1-&gt;4)-alpha-L-IdoA-(1-&gt;3)-beta-D-GalNAc-4-sulfate-(1-&gt;4)-alpha-L-IdoA-(1-&gt;3)-D-GalNAc-4-sulfate + H2O = alpha-L-IdoA-(1-&gt;3)-beta-D-GalNAc-4-sulfate-(1-&gt;4)-alpha-L-IdoA-(1-&gt;3)-D-GalNAc-4-sulfate + N-acetyl-D-galactosamine. It catalyses the reaction N-acetyl-beta-D-6-sulfogalactosaminyl-(1-&gt;4)-alpha-L-iduronyl-(1-&gt;3)-N-acetyl-D-6-sulfogalactosamine + H2O = alpha-L-iduronyl-(1-&gt;3)-N-acetyl-D-6-sulfogalactosamine + N-acetyl-D-6-sulfogalactosamine. Addition of GM2A stimulates the hydrolysis of sulfated glycosphingolipid SM2 and the ganglioside GM2. Hydrolyzes the non-reducing end N-acetyl-D-hexosamine and/or sulfated N-acetyl-D-hexosamine of glycoconjugates, such as the oligosaccharide moieties from proteins and neutral glycolipids, or from certain mucopolysaccharides. The isozyme B does not hydrolyze each of these substrates, however hydrolyzes efficiently neutral oligosaccharide. Only the isozyme A is responsible for the degradation of GM2 gangliosides in the presence of GM2A. During fertilization is responsible, at least in part, for the zona block to polyspermy. Present in the cortical granules of non-activated oocytes, is exocytosed during the cortical reaction in response to oocyte activation and inactivates the sperm galactosyltransferase-binding site, accounting for the block in sperm binding to the zona pellucida. The chain is Beta-hexosaminidase subunit beta from Rattus norvegicus (Rat).